The following is a 256-amino-acid chain: Triosephosphate isomerase (256 aa).

10–12 lines the substrate pocket; that stretch reads NWK. His97 acts as the Electrophile in catalysis. The active-site Proton acceptor is the Glu169. Substrate-binding positions include Gly175, Ser214, and 235-236; that span reads GG.

The protein belongs to the triosephosphate isomerase family. As to quaternary structure, homodimer.

It localises to the cytoplasm. It catalyses the reaction D-glyceraldehyde 3-phosphate = dihydroxyacetone phosphate. The protein operates within carbohydrate biosynthesis; gluconeogenesis. It functions in the pathway carbohydrate degradation; glycolysis; D-glyceraldehyde 3-phosphate from glycerone phosphate: step 1/1. Involved in the gluconeogenesis. Catalyzes stereospecifically the conversion of dihydroxyacetone phosphate (DHAP) to D-glyceraldehyde-3-phosphate (G3P). This chain is Triosephosphate isomerase, found in Actinobacillus pleuropneumoniae serotype 7 (strain AP76).